A 725-amino-acid polypeptide reads, in one-letter code: Ribosomal RNA large subunit methyltransferase K/L (725 aa).

The THUMP domain occupies 46-157; it reads VAYRLCLWSR…RGQATLSLDL (112 aa).

It belongs to the methyltransferase superfamily. RlmKL family.

Its subcellular location is the cytoplasm. The enzyme catalyses guanosine(2445) in 23S rRNA + S-adenosyl-L-methionine = N(2)-methylguanosine(2445) in 23S rRNA + S-adenosyl-L-homocysteine + H(+). It carries out the reaction guanosine(2069) in 23S rRNA + S-adenosyl-L-methionine = N(2)-methylguanosine(2069) in 23S rRNA + S-adenosyl-L-homocysteine + H(+). Specifically methylates the guanine in position 2445 (m2G2445) and the guanine in position 2069 (m7G2069) of 23S rRNA. The sequence is that of Ribosomal RNA large subunit methyltransferase K/L from Pseudomonas aeruginosa (strain ATCC 15692 / DSM 22644 / CIP 104116 / JCM 14847 / LMG 12228 / 1C / PRS 101 / PAO1).